A 643-amino-acid chain; its full sequence is Beta-1,3-galactosyltransferase GALT1 (643 aa).

The Cytoplasmic segment spans residues 1-6 (MKRFYG). A helical; Signal-anchor for type II membrane protein transmembrane segment spans residues 7 to 23 (GLLVVSMCMFLTVYRYV). The Lumenal segment spans residues 24–643 (DLNTPVEKPY…TKRSLCCREW (620 aa)). N-linked (GlcNAc...) asparagine glycosylation is found at Asn45, Asn87, Asn144, Asn162, Asn277, Asn287, and Asn508. The Galectin domain occupies 171–364 (LKLQIPCGLT…DFRLISILAS (194 aa)).

Belongs to the glycosyltransferase 31 family. In terms of assembly, interacts with GMII. Mn(2+) is required as a cofactor. In terms of tissue distribution, expressed in stems and siliques.

The protein localises to the golgi apparatus membrane. It functions in the pathway protein modification; protein glycosylation. Functionally, beta-1,3-galactosyltransferase that transfers galactose from UDP-galactose to substrates with a terminal beta-N-acetylglucosamine (beta-GlcNAc) residue. Involved in the biosynthesis of N-glycans containing Lewis a structures (with the combination of FUT13). The sequence is that of Beta-1,3-galactosyltransferase GALT1 from Arabidopsis thaliana (Mouse-ear cress).